The primary structure comprises 134 residues: MRSVLTISAGLLFGLALSSVAHANDHKILGVIAMPRNETNDLALKIPVCRIVKRIQLTADHGDIELSGASVYFKTARSASQSLNVPSSIKEGQTTGWININSDNDNKRCVSKITFSGHTVNSSDMARLKVIGDD.

An N-terminal signal peptide occupies residues 1 to 23; sequence MRSVLTISAGLLFGLALSSVAHA.

The protein belongs to the UPF0412 family.

This chain is UPF0412 protein YaaI, found in Salmonella agona (strain SL483).